Consider the following 947-residue polypeptide: Bifunctional glutamine synthetase adenylyltransferase/adenylyl-removing enzyme (947 aa).

An adenylyl removase region spans residues 1–440; the sequence is MTPLSSPLSQ…VFNELIGDDE (440 aa). The tract at residues 450-947 is adenylyl transferase; that stretch reads SEPWRDVWQD…ASWRKWLVAV (498 aa).

This sequence belongs to the GlnE family. Mg(2+) serves as cofactor.

It carries out the reaction [glutamine synthetase]-O(4)-(5'-adenylyl)-L-tyrosine + phosphate = [glutamine synthetase]-L-tyrosine + ADP. The enzyme catalyses [glutamine synthetase]-L-tyrosine + ATP = [glutamine synthetase]-O(4)-(5'-adenylyl)-L-tyrosine + diphosphate. Involved in the regulation of glutamine synthetase GlnA, a key enzyme in the process to assimilate ammonia. When cellular nitrogen levels are high, the C-terminal adenylyl transferase (AT) inactivates GlnA by covalent transfer of an adenylyl group from ATP to specific tyrosine residue of GlnA, thus reducing its activity. Conversely, when nitrogen levels are low, the N-terminal adenylyl removase (AR) activates GlnA by removing the adenylyl group by phosphorolysis, increasing its activity. The regulatory region of GlnE binds the signal transduction protein PII (GlnB) which indicates the nitrogen status of the cell. The protein is Bifunctional glutamine synthetase adenylyltransferase/adenylyl-removing enzyme of Salmonella dublin (strain CT_02021853).